The chain runs to 349 residues: MDRKETIKIKVGDKFIGGDSPITVQSMTNTDTRDVEKTVEQIKKLEEVDCDIIRCAVPDDEACQALGKITKKIAIPLVADIHFDYRLAIKAIDNGISALRINPGNIGNEEKVNLVSKKAKEKGIPIRIGVNSGSLEKDILNKYGGVCSDALVESALRHVEILNKVDFHDIVISIKSSNVNQMIESYKKISSKVNYPLHLGVTEAGTPWRGIIKSSVGIGTLLSQGIGDTIRVSLTGDPIEEIKAGKEILRALNLYSKGVEFISCPTCGRTEINLIKIAKEVEKRLDGFDKNIKVAIMGCVVNGPGEARDADIGIAGGKGYGLIFKKGEVVRKLKEEDLVEGLIEEIKNI.

The [4Fe-4S] cluster site is built by Cys264, Cys267, Cys299, and Glu306.

It belongs to the IspG family. The cofactor is [4Fe-4S] cluster.

It catalyses the reaction (2E)-4-hydroxy-3-methylbut-2-enyl diphosphate + oxidized [flavodoxin] + H2O + 2 H(+) = 2-C-methyl-D-erythritol 2,4-cyclic diphosphate + reduced [flavodoxin]. It participates in isoprenoid biosynthesis; isopentenyl diphosphate biosynthesis via DXP pathway; isopentenyl diphosphate from 1-deoxy-D-xylulose 5-phosphate: step 5/6. Functionally, converts 2C-methyl-D-erythritol 2,4-cyclodiphosphate (ME-2,4cPP) into 1-hydroxy-2-methyl-2-(E)-butenyl 4-diphosphate. The sequence is that of 4-hydroxy-3-methylbut-2-en-1-yl diphosphate synthase (flavodoxin) from Clostridium tetani (strain Massachusetts / E88).